We begin with the raw amino-acid sequence, 793 residues long: DNA mismatch repair protein MutS (793 aa).

589-596 (GPNMSGKS) is an ATP binding site.

It belongs to the DNA mismatch repair MutS family.

In terms of biological role, this protein is involved in the repair of mismatches in DNA. It is possible that it carries out the mismatch recognition step. This protein has a weak ATPase activity. The polypeptide is DNA mismatch repair protein MutS (Thermotoga petrophila (strain ATCC BAA-488 / DSM 13995 / JCM 10881 / RKU-1)).